The primary structure comprises 271 residues: Troponin T, fast skeletal muscle (271 aa).

The segment covering 1–21 has biased composition (acidic residues); the sequence is MSDEEVEHVEEEYEEEEEAQE. The interval 1–74 is disordered; it reads MSDEEVEHVE…EKVDFDDIQK (74 aa). Residue S2 is modified to N-acetylserine. A Phosphoserine modification is found at S2. 2 stretches are compositionally biased toward basic and acidic residues: residues 31–53 and 62–74; these read PEVHEEVHEVHEPEEVQEEEKPR and PEGEKVDFDDIQK. S90 carries the post-translational modification Phosphoserine. Residues 113-155 are compositionally biased toward basic and acidic residues; it reads RAERAEQQRIRAEKERERQNRLAEEKARREEEDAKRRAEDDLK. Residues 113 to 194 are disordered; the sequence is RAERAEQQRI…REMKKKVLAE (82 aa). Residues S161, S168, and S169 each carry the phosphoserine modification. Residues 183-194 show a composition bias toward basic and acidic residues; it reads TAREMKKKVLAE. S205 bears the Phosphoserine mark. Y221 bears the Phosphotyrosine mark. Positions 248–271 are disordered; sequence IDQAQKHSKKAGTAPKGKVGGRWK.

This sequence belongs to the troponin T family.

Functionally, troponin T is the tropomyosin-binding subunit of troponin, the thin filament regulatory complex which confers calcium-sensitivity to striated muscle actomyosin ATPase activity. This chain is Troponin T, fast skeletal muscle (Tnnt3), found in Bos taurus (Bovine).